The primary structure comprises 766 residues: MSQEEVPGEIPGDIAIEKAENTVQDDVEAKNTSETKKTIPPMLNVEKVDVAAVGEKSPAPVSVYDLFKKYQKPDVKSDSEDMNIGFDQLTTDEKNGFLRKLQMLTVGNKKTLKVPGESTPSPASRLLKKFVPSRRPSTENKSCESPSRFSLFGKSNKKAPELERPMNGGQPRKKSARRLNFGKEIEERTETDFQNNRVVAAMTREYEKIVTLKGVPVPINKPPRQQGPRGSLETPTDSPAKTETSSISKSYGSDYQSSRDRYTSINEDSLTKKRISTPNRGQGLSNRDNATWHGELPPRDYTSPTFSRKIFVGGVPWDITEAALKDSFGEFGSCAVEWPGHEARYRNAQSNTASLNLRNQSKYTGQAATGYVYMIFEDERAVASLLHECSQEIGGAGEWYFKIRAQRSKSTEIRQVQIIPWVTSDSMFCEDESLLEVGIEPKRTVFVGALHGMMTAQVLHSIMEDCFGSVECVQLDTDKFKYPIGSGRVTFREHGAYFKAIEMGYLHVHTSKFRKRVQIDPFLESTNCMVCTTELAHCFCRNRNCFKYYCHTCWAVDHGHGHDGEVHVPVIVPSSASKAFSGPNRRSHLSSNSPSKPASLMSSSNSQVAHMVSPAYPVLVGAPAQNLSALYGYIQNSQQMMITPAAVYEPPMTPSPNEMKRRSFPEFQPQPTVFFNSTPMMTPQKGVPCSDGSAVPAYYANSAAFLTPPSSYYNSPSHSTSSNLSPQQPQQYYGANLYYGYMPQMSYDGGPNQSAMHLPHTPNYQQ.

Disordered regions lie at residues methionine 1–threonine 35, valine 131–leucine 179, and proline 216–arginine 299. Polar residues-rich tracts occupy residues glutamate 233–glutamine 256 and serine 276–asparagine 289. The RRM domain maps to isoleucine 310–glycine 332. Residues lysine 578–serine 602 form a disordered region. Positions leucine 589–serine 602 are enriched in low complexity.

Its function is as follows. Cytoplasmic polyadenylation element binding protein that binds to and regulates the translation of specific mRNAs. This chain is Cytoplasmic polyadenylation element-binding protein 3 (cpb-3), found in Caenorhabditis remanei (Caenorhabditis vulgaris).